The following is a 631-amino-acid chain: Phosphomethylpyrimidine synthase (631 aa).

Substrate is bound by residues N239, M268, Y297, H333, 353 to 355 (SRG), 394 to 397 (DGLR), and E433. Residue H437 coordinates Zn(2+). Position 460 (Y460) interacts with substrate. Zn(2+) is bound at residue H501. [4Fe-4S] cluster contacts are provided by C581, C584, and C589.

The protein belongs to the ThiC family. In terms of assembly, homodimer. Requires [4Fe-4S] cluster as cofactor.

It catalyses the reaction 5-amino-1-(5-phospho-beta-D-ribosyl)imidazole + S-adenosyl-L-methionine = 4-amino-2-methyl-5-(phosphooxymethyl)pyrimidine + CO + 5'-deoxyadenosine + formate + L-methionine + 3 H(+). It functions in the pathway cofactor biosynthesis; thiamine diphosphate biosynthesis. Its function is as follows. Catalyzes the synthesis of the hydroxymethylpyrimidine phosphate (HMP-P) moiety of thiamine from aminoimidazole ribotide (AIR) in a radical S-adenosyl-L-methionine (SAM)-dependent reaction. The chain is Phosphomethylpyrimidine synthase from Escherichia coli (strain SMS-3-5 / SECEC).